The chain runs to 256 residues: MRVIVADCSAEYSGRLNASLPLAKRVLLIKADSSLLIFSELGSYKPLNWMTAPCTIREIDPAAKSAQHSRESVAGGAVDGDSATHSPESVAAGEPEKVLRVSADKGSDILEVTLQHIYSDQTYDLGEDPGLIKDGVEDHLQRYLAEQIERIGKGAKLVRREYPTAIGPVDIMAVNAEGEHVAVEIKRHGGIDGVEQLTRYCELLNRDPLLAPVHGIFAAQTITPQAQVLAKDRGFTCLILDYDDMKGTEDDSLRLF.

Positions alanine 62 to lysine 97 are disordered.

The protein belongs to the NucS endonuclease family.

It localises to the cytoplasm. Functionally, cleaves both 3' and 5' ssDNA extremities of branched DNA structures. The chain is Endonuclease NucS from Bifidobacterium longum (strain NCC 2705).